A 32-amino-acid polypeptide reads, in one-letter code: Dermatoxin-J2 (32 aa).

The residue at position 32 (Gln-32) is a Glutamine amide.

Expressed by the skin glands.

The protein localises to the secreted. Antimicrobial peptide. The sequence is that of Dermatoxin-J2 from Phasmahyla jandaia (Jandaia leaf frog).